A 274-amino-acid chain; its full sequence is Rhamnulose-1-phosphate aldolase (274 aa).

Glu-117 is a catalytic residue. Residues His-141, His-143, and His-212 each coordinate Zn(2+).

The protein belongs to the aldolase class II family. RhaD subfamily. As to quaternary structure, homotetramer. Zn(2+) serves as cofactor.

The protein localises to the cytoplasm. It catalyses the reaction L-rhamnulose 1-phosphate = (S)-lactaldehyde + dihydroxyacetone phosphate. It functions in the pathway carbohydrate degradation; L-rhamnose degradation; glycerone phosphate from L-rhamnose: step 3/3. Functionally, catalyzes the reversible cleavage of L-rhamnulose-1-phosphate to dihydroxyacetone phosphate (DHAP) and L-lactaldehyde. This chain is Rhamnulose-1-phosphate aldolase, found in Shigella sonnei (strain Ss046).